A 330-amino-acid polypeptide reads, in one-letter code: MGIGIIIASHGKFAEGIHQSGSMIFGEQEKVQVVTFMPNEGPDDLYGHFNNAIQQFDADDEILVLADLWSGSPFNQASRVAGENPDRKMAIITGLNLPMLIQAYTERLMDAGAGIEQVAANIIKESKDGIKALPEDLNPVEETAATEKVVNALQGAIPAGTVIGDGKLKINLARVDTRLLHGQVATAWTPASKADRIIVASDEVAQDDLRKQLIKQAAPGGVKANVVPISKLIEASKDPRFGNTHALILFQTPQDALRAVEGGVEINELNVGSMAHSTGKTMVNNVLSMDKEDVATFEKLRDLSVTFDVRKVPNDSKKNLFELIQKANIK.

In terms of domain architecture, PTS EIIA type-4 spans 2–130; that stretch reads GIGIIIASHG…NIIKESKDGI (129 aa). His-10 serves as the catalytic Tele-phosphohistidine intermediate; for EIIA activity. Phosphohistidine; by HPr is present on His-10. Residues 143 to 161 are hinge; that stretch reads TAATEKVVNALQGAIPAGT. The 165-residue stretch at 166 to 330 folds into the PTS EIIB type-4 domain; that stretch reads GKLKINLARV…FELIQKANIK (165 aa). Catalysis depends on His-181, which acts as the Pros-phosphohistidine intermediate; for EIIB activity. His-181 is modified (phosphohistidine; by EIIA).

In terms of assembly, homodimer.

The protein resides in the cytoplasm. It localises to the cell membrane. It catalyses the reaction D-mannose(out) + N(pros)-phospho-L-histidyl-[protein] = D-mannose 6-phosphate(in) + L-histidyl-[protein]. In terms of biological role, the phosphoenolpyruvate-dependent sugar phosphotransferase system (sugar PTS), a major carbohydrate active transport system, catalyzes the phosphorylation of incoming sugar substrates concomitantly with their translocation across the cell membrane. The enzyme II ManXYZ PTS system is involved in mannose transport. This is PTS system mannose-specific EIIAB component from Streptococcus pyogenes serotype M6 (strain ATCC BAA-946 / MGAS10394).